A 298-amino-acid polypeptide reads, in one-letter code: UDP-3-O-acyl-N-acetylglucosamine deacetylase (298 aa).

Zn(2+) is bound by residues H75, H232, and D236. Catalysis depends on H259, which acts as the Proton donor.

Belongs to the LpxC family. It depends on Zn(2+) as a cofactor.

It carries out the reaction a UDP-3-O-[(3R)-3-hydroxyacyl]-N-acetyl-alpha-D-glucosamine + H2O = a UDP-3-O-[(3R)-3-hydroxyacyl]-alpha-D-glucosamine + acetate. Its pathway is glycolipid biosynthesis; lipid IV(A) biosynthesis; lipid IV(A) from (3R)-3-hydroxytetradecanoyl-[acyl-carrier-protein] and UDP-N-acetyl-alpha-D-glucosamine: step 2/6. Its function is as follows. Catalyzes the hydrolysis of UDP-3-O-myristoyl-N-acetylglucosamine to form UDP-3-O-myristoylglucosamine and acetate, the committed step in lipid A biosynthesis. The chain is UDP-3-O-acyl-N-acetylglucosamine deacetylase from Nitratiruptor sp. (strain SB155-2).